A 598-amino-acid polypeptide reads, in one-letter code: Fumarate reductase flavoprotein subunit (598 aa).

Residues 12 to 16 (GAGGA), 36 to 38 (ISK), 44 to 52 (SHTVAAEGG), 156 to 158 (HFV), and Asp-212 each bind FAD. A Tele-8alpha-FAD histidine modification is found at His-45. Catalysis depends on residues His-233 and Arg-249. FAD is bound by residues 356-357 (HY), Glu-380, and 391-397 (RLGSNSL). Residues 577–598 (AKRVYGGEATAQDKQNKEKANG) are disordered.

The protein belongs to the FAD-dependent oxidoreductase 2 family. FRD/SDH subfamily. Part of an enzyme complex containing four subunits: a flavoprotein (FrdA), an iron-sulfur protein (FrdB), and two hydrophobic anchor proteins (FrdC and FrdD). It depends on FAD as a cofactor.

The protein localises to the cell inner membrane. It carries out the reaction a quinone + succinate = fumarate + a quinol. The enzyme catalyses a menaquinone + succinate = a menaquinol + fumarate. Its function is as follows. Two distinct, membrane-bound, FAD-containing enzymes are responsible for the catalysis of fumarate and succinate interconversion; the fumarate reductase is used in anaerobic growth, and the succinate dehydrogenase is used in aerobic growth. The sequence is that of Fumarate reductase flavoprotein subunit (frdA) from Proteus vulgaris.